Here is a 254-residue protein sequence, read N- to C-terminus: Citrate synthase-lysine N-methyltransferase CSKMT, mitochondrial (254 aa).

The N-terminal 45 residues, 1 to 45 (MLLNRFLVPLRSLQKLTQARRWHQTSLINDLVVNMDKKAMWDRFY), are a transit peptide targeting the mitochondrion.

Belongs to the methyltransferase superfamily.

It is found in the mitochondrion. The catalysed reaction is L-lysyl-[citrate synthase] + S-adenosyl-L-methionine = N(6)-methyl-L-lysyl-[citrate synthase] + S-adenosyl-L-homocysteine + H(+). The enzyme catalyses N(6)-methyl-L-lysyl-[citrate synthase] + S-adenosyl-L-methionine = N(6),N(6)-dimethyl-L-lysyl-[citrate synthase] + S-adenosyl-L-homocysteine + H(+). It catalyses the reaction N(6),N(6)-dimethyl-L-lysyl-[citrate synthase] + S-adenosyl-L-methionine = N(6),N(6),N(6)-trimethyl-L-lysyl-[citrate synthase] + S-adenosyl-L-homocysteine + H(+). With respect to regulation, citrate synthase-lysine methyltransferase activity is inhibited by S-adenosylhomocysteine (AdoHcy) and oxaloacetate (OAA). Its function is as follows. Protein-lysine methyltransferase that selectively trimethylates citrate synthase (CS) in mitochondria. Seems to conduct trimethylation in a highly distributive manner rather than in a processive manner, and thus introduces a single methyl group per binding event. This Danio rerio (Zebrafish) protein is Citrate synthase-lysine N-methyltransferase CSKMT, mitochondrial.